The following is a 239-amino-acid chain: 7-cyano-7-deazaguanine synthase (239 aa).

8–18 (FSGGLDSTACL) is a binding site for ATP. Positions 194, 209, 212, and 215 each coordinate Zn(2+).

It belongs to the QueC family. It depends on Zn(2+) as a cofactor.

It carries out the reaction 7-carboxy-7-deazaguanine + NH4(+) + ATP = 7-cyano-7-deazaguanine + ADP + phosphate + H2O + H(+). It functions in the pathway purine metabolism; 7-cyano-7-deazaguanine biosynthesis. In terms of biological role, catalyzes the ATP-dependent conversion of 7-carboxy-7-deazaguanine (CDG) to 7-cyano-7-deazaguanine (preQ(0)). The sequence is that of 7-cyano-7-deazaguanine synthase from Pyrococcus horikoshii (strain ATCC 700860 / DSM 12428 / JCM 9974 / NBRC 100139 / OT-3).